We begin with the raw amino-acid sequence, 239 residues long: LexA repressor (239 aa).

Residues 26-46 (FDEMKDALDLKSKSGIHRLIT) constitute a DNA-binding region (H-T-H motif). Active-site for autocatalytic cleavage activity residues include Ser-160 and Lys-198.

Belongs to the peptidase S24 family. Homodimer.

The catalysed reaction is Hydrolysis of Ala-|-Gly bond in repressor LexA.. In terms of biological role, represses a number of genes involved in the response to DNA damage (SOS response), including recA and lexA. In the presence of single-stranded DNA, RecA interacts with LexA causing an autocatalytic cleavage which disrupts the DNA-binding part of LexA, leading to derepression of the SOS regulon and eventually DNA repair. The sequence is that of LexA repressor from Methylobacterium sp. (strain 4-46).